A 317-amino-acid chain; its full sequence is Acetyl-coenzyme A carboxylase carboxyl transferase subunit alpha (317 aa).

In terms of domain architecture, CoA carboxyltransferase C-terminal spans 39–293 (RLETKAREAL…GDAIADALSQ (255 aa)).

It belongs to the AccA family. In terms of assembly, acetyl-CoA carboxylase is a heterohexamer composed of biotin carboxyl carrier protein (AccB), biotin carboxylase (AccC) and two subunits each of ACCase subunit alpha (AccA) and ACCase subunit beta (AccD).

The protein localises to the cytoplasm. It catalyses the reaction N(6)-carboxybiotinyl-L-lysyl-[protein] + acetyl-CoA = N(6)-biotinyl-L-lysyl-[protein] + malonyl-CoA. It participates in lipid metabolism; malonyl-CoA biosynthesis; malonyl-CoA from acetyl-CoA: step 1/1. Functionally, component of the acetyl coenzyme A carboxylase (ACC) complex. First, biotin carboxylase catalyzes the carboxylation of biotin on its carrier protein (BCCP) and then the CO(2) group is transferred by the carboxyltransferase to acetyl-CoA to form malonyl-CoA. The protein is Acetyl-coenzyme A carboxylase carboxyl transferase subunit alpha of Xanthobacter autotrophicus (strain ATCC BAA-1158 / Py2).